We begin with the raw amino-acid sequence, 72 residues long: Translation initiation factor IF-1 (72 aa).

Positions 1–72 (MTKEDSFEMH…SKGRIIFRSR (72 aa)) constitute an S1-like domain.

This sequence belongs to the IF-1 family. As to quaternary structure, component of the 30S ribosomal translation pre-initiation complex which assembles on the 30S ribosome in the order IF-2 and IF-3, IF-1 and N-formylmethionyl-tRNA(fMet); mRNA recruitment can occur at any time during PIC assembly.

Its subcellular location is the cytoplasm. In terms of biological role, one of the essential components for the initiation of protein synthesis. Stabilizes the binding of IF-2 and IF-3 on the 30S subunit to which N-formylmethionyl-tRNA(fMet) subsequently binds. Helps modulate mRNA selection, yielding the 30S pre-initiation complex (PIC). Upon addition of the 50S ribosomal subunit IF-1, IF-2 and IF-3 are released leaving the mature 70S translation initiation complex. In Blochmanniella pennsylvanica (strain BPEN), this protein is Translation initiation factor IF-1.